The primary structure comprises 298 residues: ATP synthase gamma chain (298 aa).

This sequence belongs to the ATPase gamma chain family. In terms of assembly, F-type ATPases have 2 components, CF(1) - the catalytic core - and CF(0) - the membrane proton channel. CF(1) has five subunits: alpha(3), beta(3), gamma(1), delta(1), epsilon(1). CF(0) has three main subunits: a, b and c.

It localises to the cell inner membrane. Produces ATP from ADP in the presence of a proton gradient across the membrane. The gamma chain is believed to be important in regulating ATPase activity and the flow of protons through the CF(0) complex. The sequence is that of ATP synthase gamma chain from Francisella tularensis subsp. holarctica (strain LVS).